A 471-amino-acid polypeptide reads, in one-letter code: Argininosuccinate lyase (471 aa).

This sequence belongs to the lyase 1 family. Argininosuccinate lyase subfamily.

The protein localises to the cytoplasm. It catalyses the reaction 2-(N(omega)-L-arginino)succinate = fumarate + L-arginine. The protein operates within amino-acid biosynthesis; L-arginine biosynthesis; L-arginine from L-ornithine and carbamoyl phosphate: step 3/3. In Deinococcus radiodurans (strain ATCC 13939 / DSM 20539 / JCM 16871 / CCUG 27074 / LMG 4051 / NBRC 15346 / NCIMB 9279 / VKM B-1422 / R1), this protein is Argininosuccinate lyase.